We begin with the raw amino-acid sequence, 228 residues long: Geranylgeranylglyceryl phosphate synthase (228 aa).

Lys-13 contributes to the sn-glycerol 1-phosphate binding site. Asp-15 and Thr-41 together coordinate Mg(2+). Sn-glycerol 1-phosphate-binding positions include 159–164, Gly-189, and 209–210; these read YIEYSG and GN.

This sequence belongs to the GGGP/HepGP synthase family. Group I subfamily. Mg(2+) is required as a cofactor.

Its subcellular location is the cytoplasm. The enzyme catalyses sn-glycerol 1-phosphate + (2E,6E,10E)-geranylgeranyl diphosphate = sn-3-O-(geranylgeranyl)glycerol 1-phosphate + diphosphate. The protein operates within membrane lipid metabolism; glycerophospholipid metabolism. Functionally, prenyltransferase that catalyzes the transfer of the geranylgeranyl moiety of geranylgeranyl diphosphate (GGPP) to the C3 hydroxyl of sn-glycerol-1-phosphate (G1P). This reaction is the first ether-bond-formation step in the biosynthesis of archaeal membrane lipids. In Methanospirillum hungatei JF-1 (strain ATCC 27890 / DSM 864 / NBRC 100397 / JF-1), this protein is Geranylgeranylglyceryl phosphate synthase.